Reading from the N-terminus, the 116-residue chain is Large ribosomal subunit protein uL18 (116 aa).

Belongs to the universal ribosomal protein uL18 family. Part of the 50S ribosomal subunit; part of the 5S rRNA/L5/L18/L25 subcomplex. Contacts the 5S and 23S rRNAs.

Functionally, this is one of the proteins that bind and probably mediate the attachment of the 5S RNA into the large ribosomal subunit, where it forms part of the central protuberance. The chain is Large ribosomal subunit protein uL18 from Pseudomonas putida (strain GB-1).